The following is a 204-amino-acid chain: MPKLLVVETSPRGAASISRNITKTFVAKWKAAHADSAVVQRDLTGTGLEFVTAPWLEAYFTPPDQHTDAMKQALALSDELVAELLNADELVIGTPVYNYNVPALLKAWIDHIVRKGITLGMDGKGLLTGKKATVLIASGGIYSEGSPIADRAIAPQYLKLILGVIGIENVTIVAGGGAKAVDMGEATMDGFIATLDSELTAAAQ.

Residues Ser-10 and Ser-16–Ser-18 contribute to the FMN site.

It belongs to the azoreductase type 1 family. Homodimer. The cofactor is FMN.

It carries out the reaction 2 a quinone + NADH + H(+) = 2 a 1,4-benzosemiquinone + NAD(+). The catalysed reaction is N,N-dimethyl-1,4-phenylenediamine + anthranilate + 2 NAD(+) = 2-(4-dimethylaminophenyl)diazenylbenzoate + 2 NADH + 2 H(+). Its function is as follows. Quinone reductase that provides resistance to thiol-specific stress caused by electrophilic quinones. Functionally, also exhibits azoreductase activity. Catalyzes the reductive cleavage of the azo bond in aromatic azo compounds to the corresponding amines. The protein is FMN-dependent NADH:quinone oxidoreductase 2 of Jannaschia sp. (strain CCS1).